The sequence spans 390 residues: Altered inheritance of mitochondria protein 6 (390 aa).

The first 17 residues, 1 to 17 (MLGLKGCLTILIGYVIA), serve as a signal peptide directing secretion.

This sequence belongs to the AIM6 family.

This chain is Altered inheritance of mitochondria protein 6, found in Saccharomyces cerevisiae (strain ATCC 204508 / S288c) (Baker's yeast).